The sequence spans 649 residues: Threonine--tRNA ligase (649 aa).

One can recognise a TGS domain in the interval 1 to 60 (MHVTLPDGKQLDLQPGATALDAAKAIGPRLAQDALGATANGELTDLMTPLSDGASITLIT). A catalytic region spans residues 248–544 (DHRKLGKELE…LIEHYAGDFP (297 aa)). Zn(2+) contacts are provided by C341, H392, and H521.

This sequence belongs to the class-II aminoacyl-tRNA synthetase family. Homodimer. The cofactor is Zn(2+).

It is found in the cytoplasm. The catalysed reaction is tRNA(Thr) + L-threonine + ATP = L-threonyl-tRNA(Thr) + AMP + diphosphate + H(+). In terms of biological role, catalyzes the attachment of threonine to tRNA(Thr) in a two-step reaction: L-threonine is first activated by ATP to form Thr-AMP and then transferred to the acceptor end of tRNA(Thr). Also edits incorrectly charged L-seryl-tRNA(Thr). The sequence is that of Threonine--tRNA ligase from Deinococcus radiodurans (strain ATCC 13939 / DSM 20539 / JCM 16871 / CCUG 27074 / LMG 4051 / NBRC 15346 / NCIMB 9279 / VKM B-1422 / R1).